A 303-amino-acid polypeptide reads, in one-letter code: Probable 5-dehydro-4-deoxyglucarate dehydratase (303 aa).

This sequence belongs to the DapA family.

The enzyme catalyses 5-dehydro-4-deoxy-D-glucarate + H(+) = 2,5-dioxopentanoate + CO2 + H2O. The protein operates within carbohydrate acid metabolism; D-glucarate degradation; 2,5-dioxopentanoate from D-glucarate: step 2/2. The protein is Probable 5-dehydro-4-deoxyglucarate dehydratase of Pseudomonas fluorescens (strain Pf0-1).